We begin with the raw amino-acid sequence, 360 residues long: Uroporphyrinogen decarboxylase (360 aa).

Substrate-binding positions include 31–35, Asp-81, Tyr-157, Thr-212, and His-333; that span reads RQAGR.

It belongs to the uroporphyrinogen decarboxylase family. Homodimer.

It localises to the cytoplasm. The catalysed reaction is uroporphyrinogen III + 4 H(+) = coproporphyrinogen III + 4 CO2. Its pathway is porphyrin-containing compound metabolism; protoporphyrin-IX biosynthesis; coproporphyrinogen-III from 5-aminolevulinate: step 4/4. Functionally, catalyzes the decarboxylation of four acetate groups of uroporphyrinogen-III to yield coproporphyrinogen-III. This Herminiimonas arsenicoxydans protein is Uroporphyrinogen decarboxylase.